A 260-amino-acid polypeptide reads, in one-letter code: Neuraminyllactose-binding hemagglutinin (260 aa).

A signal peptide spans methionine 1–glycine 27. Cysteine 28 is lipidated: N-palmitoyl cysteine. Cysteine 28 carries the S-diacylglycerol cysteine lipid modification.

Its subcellular location is the cell outer membrane. The chain is Neuraminyllactose-binding hemagglutinin (hpaA) from Helicobacter pylori (strain J99 / ATCC 700824) (Campylobacter pylori J99).